The chain runs to 142 residues: uncharacterized protein (142 aa).

3 consecutive transmembrane segments (helical) span residues 3–23, 30–50, and 91–111; these read LIFIAKMLQYSFLPFSPFNLL, SVSWFITYSVIVSIWGFAVWI, and FFLLYLFLTASNLIVQLAYFS.

It is found in the membrane. This is an uncharacterized protein from Saccharomyces cerevisiae (strain ATCC 204508 / S288c) (Baker's yeast).